Here is a 393-residue protein sequence, read N- to C-terminus: METTVGALGENTTDTFTDFFSALDGHEAQTGSLPFTFSYGDYDMPLDEEEDVTNSRTFFAAKIVIGMALVGIMLVCGIGNFIFITALARYKKLRNLTNLLIANLAISDFLVAIVCCPFEMDYYVVRQLSWEHGHVLCASVNYLRTVSLYVSTNALLAIAIDRYLAIVHPLRPRMKCQTAAGLIFLVWSVSILIAIPAAYFTTETVLVIVERQEKIFCGQIWPVDQQFYYRSYFLLVFGLEFVGPVVAMTLCYARVSRELWFKAVPGFQTEQIRRRLRCRRRTVLGLVCVLSAYVLCWAPFYGFTIVRDFFPSVFVKEKHYLTAFYVVECIAMSNSMINTLCFVTVRNNTSKYLKRILRLQWRASPSGSKASADLDLRTTGIPATEEVDCIRLK.

Topologically, residues 1–62 (METTVGALGE…TNSRTFFAAK (62 aa)) are extracellular. An N-linked (GlcNAc...) asparagine glycan is attached at asparagine 11. Residues 63–83 (IVIGMALVGIMLVCGIGNFIF) form a helical membrane-spanning segment. Residues 84–98 (ITALARYKKLRNLTN) lie on the Cytoplasmic side of the membrane. The helical transmembrane segment at 99-119 (LLIANLAISDFLVAIVCCPFE) threads the bilayer. At 120–146 (MDYYVVRQLSWEHGHVLCASVNYLRTV) the chain is on the extracellular side. A disulfide bond links cysteine 137 and cysteine 217. Residues 147–167 (SLYVSTNALLAIAIDRYLAIV) form a helical membrane-spanning segment. Topologically, residues 168-179 (HPLRPRMKCQTA) are cytoplasmic. The chain crosses the membrane as a helical span at residues 180 to 200 (AGLIFLVWSVSILIAIPAAYF). Residues 201–232 (TTETVLVIVERQEKIFCGQIWPVDQQFYYRSY) are Extracellular-facing. Residues 233–253 (FLLVFGLEFVGPVVAMTLCYA) traverse the membrane as a helical segment. Residues 254 to 282 (RVSRELWFKAVPGFQTEQIRRRLRCRRRT) are Cytoplasmic-facing. The helical transmembrane segment at 283 to 303 (VLGLVCVLSAYVLCWAPFYGF) threads the bilayer. Residues 304–322 (TIVRDFFPSVFVKEKHYLT) are Extracellular-facing. The helical transmembrane segment at 323–343 (AFYVVECIAMSNSMINTLCFV) threads the bilayer. Topologically, residues 344–393 (TVRNNTSKYLKRILRLQWRASPSGSKASADLDLRTTGIPATEEVDCIRLK) are cytoplasmic.

Belongs to the G-protein coupled receptor 1 family. Expressed at high levels in the heart, skeletal muscle and pancreas. Expressed at lower levels in the brain, lung, liver and kidney.

The protein resides in the cell membrane. Receptor for prokineticin 1. Exclusively coupled to the G(q) subclass of heteromeric G proteins. Activation leads to mobilization of calcium, stimulation of phosphoinositide turnover and activation of p44/p42 mitogen-activated protein kinase. May play a role during early pregnancy. The chain is Prokineticin receptor 1 (Prokr1) from Mus musculus (Mouse).